The primary structure comprises 41 residues: Large ribosomal subunit protein bL36B (41 aa).

The protein belongs to the bacterial ribosomal protein bL36 family.

The sequence is that of Large ribosomal subunit protein bL36B from Neisseria meningitidis serogroup B (strain ATCC BAA-335 / MC58).